A 918-amino-acid chain; its full sequence is Translation initiation factor IF-2 (918 aa).

The interval 39-321 is disordered; sequence DDASEKHLRN…KRDGRMKETT (283 aa). Positions 95–146 are enriched in low complexity; it reads KSSNNESTTRNNNNNKNGNQNRNNTNGRPNNNQNRPNNNRNQNNNRNGNRPN. Residues 148–158 are compositionally biased toward basic and acidic residues; it reads PKRDEKQDRIR. Low complexity predominate over residues 159-174; it reads ASVAEAARMAAQANRE. Over residues 180–190 the composition is skewed to polar residues; the sequence is PQANRQRTNSA. 3 stretches are compositionally biased toward low complexity: residues 201–231, 237–267, and 278–296; these read NNQNRPNNNNRNGNNVNRTNNNNRPNNNNRN, SRPNNTNQTTNNRPANNTTRPAAPAATTANN, and GRNNNSRGGNRFGNNQNRP. Residues 302–313 are compositionally biased toward basic residues; it reads RKNKKRNRKAKR. In terms of domain architecture, tr-type G spans 419 to 588; sequence SRPPVVTIMG…LLQAEVLELK (170 aa). The segment at 428–435 is G1; that stretch reads GHVDHGKT. A GTP-binding site is contributed by 428 to 435; it reads GHVDHGKT. Residues 453–457 are G2; sequence GITQG. Residues 474-477 are G3; it reads DTPG. GTP is bound by residues 474–478 and 528–531; these read DTPGH and NKID. Residues 528-531 form a G4 region; that stretch reads NKID. The segment at 564 to 566 is G5; sequence SAK.

This sequence belongs to the TRAFAC class translation factor GTPase superfamily. Classic translation factor GTPase family. IF-2 subfamily.

It localises to the cytoplasm. Functionally, one of the essential components for the initiation of protein synthesis. Protects formylmethionyl-tRNA from spontaneous hydrolysis and promotes its binding to the 30S ribosomal subunits. Also involved in the hydrolysis of GTP during the formation of the 70S ribosomal complex. The chain is Translation initiation factor IF-2 from Pediococcus pentosaceus (strain ATCC 25745 / CCUG 21536 / LMG 10740 / 183-1w).